The sequence spans 872 residues: Alanine--tRNA ligase (872 aa).

Zn(2+) contacts are provided by His-567, His-571, Cys-669, and His-673.

The protein belongs to the class-II aminoacyl-tRNA synthetase family. Requires Zn(2+) as cofactor.

It localises to the cytoplasm. It carries out the reaction tRNA(Ala) + L-alanine + ATP = L-alanyl-tRNA(Ala) + AMP + diphosphate. Catalyzes the attachment of alanine to tRNA(Ala) in a two-step reaction: alanine is first activated by ATP to form Ala-AMP and then transferred to the acceptor end of tRNA(Ala). Also edits incorrectly charged Ser-tRNA(Ala) and Gly-tRNA(Ala) via its editing domain. The chain is Alanine--tRNA ligase from Streptococcus pyogenes serotype M4 (strain MGAS10750).